The chain runs to 324 residues: Probable metal transport system membrane protein CPn_0346/CP_0414/CPj0346/CpB0353 (324 aa).

Transmembrane regions (helical) follow at residues 1–21 (MALG…SVFF), 39–59 (IQII…TFLV), 64–84 (AMYA…VCLF), 94–114 (GTLT…IYFI), 125–145 (STAL…VFMT), 165–185 (EDIF…IFAF), 201–221 (LGIP…ACLV), 226–246 (AVGV…AKVI), 252–272 (SLMA…PASS), and 286–306 (SGIS…ISYF).

Belongs to the ABC-3 integral membrane protein family.

It is found in the cell inner membrane. Part of an ATP-driven transport system CPn_0346/CPn_0347/CPn_0348/CPn_0349 for a metal. The protein is Probable metal transport system membrane protein CPn_0346/CP_0414/CPj0346/CpB0353 of Chlamydia pneumoniae (Chlamydophila pneumoniae).